The primary structure comprises 274 residues: NH(3)-dependent NAD(+) synthetase (274 aa).

46 to 53 is a binding site for ATP; sequence GISGGQDS. Aspartate 52 provides a ligand contact to Mg(2+). Residue arginine 140 coordinates deamido-NAD(+). Threonine 160 is an ATP binding site. Glutamate 165 is a binding site for Mg(2+). Residues lysine 173 and aspartate 180 each contribute to the deamido-NAD(+) site. ATP contacts are provided by lysine 189 and threonine 211. 260–261 is a binding site for deamido-NAD(+); the sequence is HK.

The protein belongs to the NAD synthetase family. As to quaternary structure, homodimer.

The enzyme catalyses deamido-NAD(+) + NH4(+) + ATP = AMP + diphosphate + NAD(+) + H(+). The protein operates within cofactor biosynthesis; NAD(+) biosynthesis; NAD(+) from deamido-NAD(+) (ammonia route): step 1/1. Its function is as follows. Catalyzes the ATP-dependent amidation of deamido-NAD to form NAD. Uses ammonia as a nitrogen source. The polypeptide is NH(3)-dependent NAD(+) synthetase (Pectobacterium carotovorum subsp. carotovorum (strain PC1)).